The following is a 185-amino-acid chain: Protein GrpE (185 aa).

The tract at residues 1–22 is disordered; the sequence is MTASQEPVDQAPESNEPAPAVP.

The protein belongs to the GrpE family. Homodimer.

It localises to the cytoplasm. Its function is as follows. Participates actively in the response to hyperosmotic and heat shock by preventing the aggregation of stress-denatured proteins, in association with DnaK and GrpE. It is the nucleotide exchange factor for DnaK and may function as a thermosensor. Unfolded proteins bind initially to DnaJ; upon interaction with the DnaJ-bound protein, DnaK hydrolyzes its bound ATP, resulting in the formation of a stable complex. GrpE releases ADP from DnaK; ATP binding to DnaK triggers the release of the substrate protein, thus completing the reaction cycle. Several rounds of ATP-dependent interactions between DnaJ, DnaK and GrpE are required for fully efficient folding. This chain is Protein GrpE, found in Bordetella petrii (strain ATCC BAA-461 / DSM 12804 / CCUG 43448).